A 183-amino-acid polypeptide reads, in one-letter code: Beta-defensin 129 (183 aa).

A signal peptide spans 1 to 19 (MKLLFPIFASLMLQYQVNT). 3 disulfide bridges follow: cysteine 27-cysteine 53, cysteine 34-cysteine 48, and cysteine 38-cysteine 54. The interval 141–183 (TATSTKSNTKESRDSATASSPPAPPPPNILPTPSLELEEAEEQ) is disordered. A compositionally biased stretch (pro residues) spans 161–170 (PPAPPPPNIL).

The protein belongs to the beta-defensin family.

The protein localises to the secreted. Its function is as follows. Has antibacterial activity. The sequence is that of Beta-defensin 129 (DEFB129) from Gorilla gorilla gorilla (Western lowland gorilla).